Here is a 285-residue protein sequence, read N- to C-terminus: Golgi phosphoprotein 3-like (285 aa).

Positions 1–43 (MTTLTHRTRRTEVSKSSEKKIESEEDTNQERSPDNEDPGDSKD) are disordered. Basic and acidic residues predominate over residues 10–43 (RTEVSKSSEKKIESEEDTNQERSPDNEDPGDSKD). 2 residues coordinate a 1,2-diacyl-sn-glycero-3-phospho-(1D-myo-inositol 4-phosphate): Trp-67 and Arg-76. Ser-112 is subject to Phosphoserine. Arg-157 and Arg-160 together coordinate a 1,2-diacyl-sn-glycero-3-phospho-(1D-myo-inositol 4-phosphate). The tract at residues 176–187 (EKQNFLLFDMTT) is beta-hairpin required for oligomerization.

This sequence belongs to the GOLPH3/VPS74 family. As to quaternary structure, homooligomer. Does not interact MYO18; differs from GOLPH3 by its inability to interact with MYO18. May interact with ARF1. In terms of tissue distribution, expressed in a subset of tissues tested with higher expression in salivary gland, small intestine and skin (at protein level).

It localises to the golgi apparatus. The protein localises to the golgi stack membrane. It is found in the trans-Golgi network membrane. Functionally, phosphatidylinositol-4-phosphate-binding protein that may antagonize the action of GOLPH3 which is required for the process of vesicle budding at the Golgi and anterograde transport to the plasma membrane. The sequence is that of Golgi phosphoprotein 3-like (Golph3l) from Mus musculus (Mouse).